Reading from the N-terminus, the 486-residue chain is Ribulose bisphosphate carboxylase large chain (486 aa).

Substrate is bound by residues Asn-125 and Thr-175. The Proton acceptor role is filled by Lys-177. Lys-179 lines the substrate pocket. Mg(2+) is bound by residues Lys-203, Asp-205, and Glu-206. Lys-203 bears the N6-carboxylysine mark. The Proton acceptor role is filled by His-295. Arg-296, His-328, and Ser-380 together coordinate substrate.

It belongs to the RuBisCO large chain family. Type I subfamily. As to quaternary structure, heterohexadecamer of 8 large chains and 8 small chains. The cofactor is Mg(2+).

The enzyme catalyses 2 (2R)-3-phosphoglycerate + 2 H(+) = D-ribulose 1,5-bisphosphate + CO2 + H2O. It carries out the reaction D-ribulose 1,5-bisphosphate + O2 = 2-phosphoglycolate + (2R)-3-phosphoglycerate + 2 H(+). RuBisCO catalyzes two reactions: the carboxylation of D-ribulose 1,5-bisphosphate, the primary event in carbon dioxide fixation, as well as the oxidative fragmentation of the pentose substrate. Both reactions occur simultaneously and in competition at the same active site. This chain is Ribulose bisphosphate carboxylase large chain, found in Aurantimonas manganoxydans (strain ATCC BAA-1229 / DSM 21871 / SI85-9A1).